The following is a 244-amino-acid chain: 3-deoxy-manno-octulosonate cytidylyltransferase (244 aa).

Belongs to the KdsB family.

The protein localises to the cytoplasm. It carries out the reaction 3-deoxy-alpha-D-manno-oct-2-ulosonate + CTP = CMP-3-deoxy-beta-D-manno-octulosonate + diphosphate. Its pathway is nucleotide-sugar biosynthesis; CMP-3-deoxy-D-manno-octulosonate biosynthesis; CMP-3-deoxy-D-manno-octulosonate from 3-deoxy-D-manno-octulosonate and CTP: step 1/1. It participates in bacterial outer membrane biogenesis; lipopolysaccharide biosynthesis. Functionally, activates KDO (a required 8-carbon sugar) for incorporation into bacterial lipopolysaccharide in Gram-negative bacteria. The chain is 3-deoxy-manno-octulosonate cytidylyltransferase from Rickettsia canadensis (strain McKiel).